The primary structure comprises 218 residues: Small ribosomal subunit protein uS3c (218 aa).

In terms of domain architecture, KH type-2 spans 43–118 (IKNYVQKNMK…KLNISITRIE (76 aa)).

It belongs to the universal ribosomal protein uS3 family. Part of the 30S ribosomal subunit.

The protein resides in the plastid. The protein localises to the chloroplast. The polypeptide is Small ribosomal subunit protein uS3c (rps3) (Populus alba (White poplar)).